The following is a 353-amino-acid chain: D-alanine--D-alanine ligase (353 aa).

Residues 135-344 (KMVFAQAGLA…FPQLVDRLVQ (210 aa)) form the ATP-grasp domain. An ATP-binding site is contributed by 171–226 (EAQLDYPMFVKPANLGSSVGISKVRTRDELEKALDLAAEYDRRLIVEAGVTAREVE). Residues Asp-297, Glu-311, and Asn-313 each contribute to the Mg(2+) site.

This sequence belongs to the D-alanine--D-alanine ligase family. The cofactor is Mg(2+). Requires Mn(2+) as cofactor.

It is found in the cytoplasm. It catalyses the reaction 2 D-alanine + ATP = D-alanyl-D-alanine + ADP + phosphate + H(+). The protein operates within cell wall biogenesis; peptidoglycan biosynthesis. Cell wall formation. This is D-alanine--D-alanine ligase from Picosynechococcus sp. (strain ATCC 27264 / PCC 7002 / PR-6) (Agmenellum quadruplicatum).